Consider the following 679-residue polypeptide: NADPH--cytochrome P450 reductase (679 aa).

Residues 1–21 (MASEQTIDGAAAIPSGGGDEP) lie on the Lumenal side of the membrane. The helical transmembrane segment at 22–42 (FLGLLDVALLAVLIGGAAFYF) threads the bilayer. At 43 to 679 (LRSRKKEEEP…QKRYSADVWS (637 aa)) the chain is on the cytoplasmic side. The Flavodoxin-like domain maps to 84–228 (LVVFYGSQTG…DFITWKDRFW (145 aa)). FMN contacts are provided by residues 90–95 (SQTGTG), 142–145 (ATYG), 177–186 (LGNKTYEHYN), and Asp212. The FAD-binding FR-type domain occupies 283–523 (KNPFLAPIKV…FIRKSQFRLP (241 aa)). Position 302 (Arg302) interacts with NADP(+). FAD is bound by residues 458–461 (RYYS), 476–478 (TAV), Tyr482, and 492–495 (GVAT). NADP(+) is bound by residues Thr537, 597–598 (SR), 603–607 (KVYVQ), and Asp640. Trp678 is an FAD binding site.

This sequence belongs to the NADPH--cytochrome P450 reductase family. The protein in the N-terminal section; belongs to the flavodoxin family. It in the C-terminal section; belongs to the flavoprotein pyridine nucleotide cytochrome reductase family. In terms of assembly, interacts with sturkopf. It depends on FAD as a cofactor. The cofactor is FMN. High in antennae.

It localises to the endoplasmic reticulum membrane. The catalysed reaction is 2 oxidized [cytochrome P450] + NADPH = 2 reduced [cytochrome P450] + NADP(+) + H(+). Its function is as follows. This enzyme is required for electron transfer from NADP to cytochrome p450 in microsomes. It can also provide electron transfer to heme oxygenase and cytochrome b5. May function to clear the olfactory organ (antennae) from accumulating chemicals. This is NADPH--cytochrome P450 reductase (Cpr) from Drosophila melanogaster (Fruit fly).